A 200-amino-acid polypeptide reads, in one-letter code: Polyadenylate-binding protein 1-like 2 (200 aa).

RRM domains lie at 2 to 80 (ASLY…WSQR) and 90 to 166 (GNVF…RFKS). Residues 170–200 (REAERGAWARQSTSADVKDFEEDTDEEATLR) are disordered. The segment covering 188-200 (DFEEDTDEEATLR) has biased composition (acidic residues).

In Homo sapiens (Human), this protein is Polyadenylate-binding protein 1-like 2 (PABPC1L2A).